We begin with the raw amino-acid sequence, 449 residues long: Chromogranin-A (449 aa).

The signal sequence occupies residues 1-18; that stretch reads MRSAAVLALLLCAGQVIA. Residues Cys-35 and Cys-56 are joined by a disulfide bond. The disordered stretch occupies residues 87–431; sequence AKERTHQQKK…EDQELESLSA (345 aa). At Ser-99 the chain carries Phosphoserine. The segment covering 107-140 has biased composition (basic and acidic residues); it reads VLEKPNDQAEPKEVTEEVSSKDAAEKRDDFKEVE. The residue at position 142 (Ser-142) is a Phosphoserine. O-linked (GalNAc...) serine glycosylation is present at Ser-185. A Phosphotyrosine modification is found at Tyr-191. Ser-200 carries the post-translational modification Phosphoserine. Residue Ser-204 is glycosylated (O-linked (GalNAc...) serine). Ser-215 is modified (phosphoserine). A compositionally biased stretch (basic and acidic residues) spans 233 to 242; the sequence is EAEAREKAVP. The O-linked (GalNAc...) threonine glycan is linked to Thr-249. The segment covering 279-297 has biased composition (basic and acidic residues); sequence GAEEAKPPEGKGEWAHSRQ. The residue at position 295 (Ser-295) is a Phosphoserine. A Glycine amide modification is found at Gly-312. A phosphoserine mark is found at Ser-315, Ser-325, and Ser-363. Positions 323–351 are enriched in basic and acidic residues; that stretch reads QLSKEWEDAKRWSKMDQLAKELTAEKRLE. A Methionine sulfoxide modification is found at Met-364. Phosphoserine is present on residues Ser-390, Ser-394, Ser-416, and Ser-430. Over residues 406–423 the composition is skewed to basic and acidic residues; it reads YPEEKKEEEGSANRRPED. Ser-416 carries an O-linked (Xyl...) (chondroitin sulfate) serine glycan.

The protein belongs to the chromogranin/secretogranin protein family. As to quaternary structure, self-interacts; self-assembly is promoted in vitro by chondroitin sulfate attachment which occurs at mildly acidic pH conditions. Interacts with SCG3. Interacts with ITPR1 in the secretory granules. In secretory granules, is attacked at both N- and C-terminal sides by proteolytic enzymes generating numerous peptides of various activities. Proteolytic processing can give rise to additional longer forms of catestatin peptides which display a less potent catecholamine release-inhibitory activity. In terms of processing, O-glycosylated; contains chondroitin sulfate (CS). CS attachment is pH-dependent, being observed at mildly acidic conditions of pH 5 but not at neutral pH, and promotes self-assembly in vitro. As to expression, highest concentration of GE-25 found in adrenal medulla with lower levels present in the pituitary, the intestinal mucosa and the pancreas. Also found in the brain.

It is found in the secreted. It localises to the cytoplasmic vesicle. The protein resides in the secretory vesicle. Its subcellular location is the neuronal dense core vesicle. Its function is as follows. Strongly inhibits glucose induced insulin release from the pancreas. In terms of biological role, completely inhibits catecholamine release from chromaffin cells. Functionally, has antibacterial activity against M.luteus. Not active against E.coli. Inhibits catecholamine release from chromaffin cells and noradrenergic neurons by acting as a non-competitive nicotinic cholinergic antagonist. Displays antibacterial activity against Gram-positive bacteria M.luteus and B.megaterium, and Gram-negative bacteria E.coli, and antifungal activity against a variety of filamentous fungi including A.fumigatus, N.hematococca, F.culmorum, F.oxyporum, T.mentagrophytes and several forms of Candida: C.albicans, C.tropicalis, C.glabrata and C.neoform. Can induce mast cell migration, degranulation and production of cytokines and chemokines. Its function is as follows. Has antibacterial activity against Gram-positive bacteria M.luteus, B.megaterium. Not active against Gram-positive bacteria B.cereus, B.subtilis, S.pyogenes, M.fortuitum, S.aureus and L.monocytogenes and against Gram-negative bacteria E.coli, E.cloacae, S.typhimurium, K.pneumoniae and P.aeruginosa. Possesses antifungal activity against N.crassa, A.fumigatus, A.brassicicola, N.hematococca, F.culmorum and F.oxyporum and against the yeast S.cerevisiae and C.albicans. Inactive against A.benhamiae. In terms of biological role, has antifungal activity against N.crassa, A.fumigatus, A.brassicicola, N.hematococca, F.culmorum, F.oxyporum, A.benhamiae, C.neoformans, as well as against yeasts C.albicans, and C.tropicalis. Seems to be inactive against C.glabrata. Interacts with the fungal cell wall, crosses the plasma membrane and accumulates in fungal cells where it inhibits calcineurin activity. Functionally, regulates granule biogenesis in endocrine cells by up-regulating the transcription of protease nexin 1 (SERPINE2) via a cAMP-PKA-SP1 pathway. This leads to inhibition of granule protein degradation in the Golgi complex which in turn promotes granule formation. In Bos taurus (Bovine), this protein is Chromogranin-A (CHGA).